A 405-amino-acid chain; its full sequence is Argininosuccinate synthase (405 aa).

ATP contacts are provided by residues 11-19 (AYSGGLDTS) and A38. The L-citrulline site is built by Y91 and S96. G121 provides a ligand contact to ATP. The L-aspartate site is built by T123, N127, and D128. N127 lines the L-citrulline pocket. Residues R131, S182, S191, E267, and Y279 each contribute to the L-citrulline site.

This sequence belongs to the argininosuccinate synthase family. Type 1 subfamily. Homotetramer.

The protein localises to the cytoplasm. The catalysed reaction is L-citrulline + L-aspartate + ATP = 2-(N(omega)-L-arginino)succinate + AMP + diphosphate + H(+). It functions in the pathway amino-acid biosynthesis; L-arginine biosynthesis; L-arginine from L-ornithine and carbamoyl phosphate: step 2/3. This Sphingopyxis alaskensis (strain DSM 13593 / LMG 18877 / RB2256) (Sphingomonas alaskensis) protein is Argininosuccinate synthase.